The chain runs to 302 residues: Protoheme IX farnesyltransferase (302 aa).

9 helical membrane-spanning segments follow: residues 28-48 (LALLMLTMYGAYFAGGGSLDP), 50-70 (MLALLTIMGFTSIGGVTAFNM), 93-115 (LNPYEALAGSLALVIAGVLSAAA), 119-138 (YVALTVIAGLYFDIIAYTQL), 147-167 (IIFGSIAGSMPALGGWAAAAG), 172-192 (GGVLMALIVFLWQPMHVWFLG), 219-239 (LIAVSLAGLIAVAWAFALYYG), 242-262 (FLTAVITTVLAALAISRIGGF), and 271-291 (ALKLFKFASPIIAVVFIILPL).

It belongs to the UbiA prenyltransferase family. Protoheme IX farnesyltransferase subfamily.

The protein localises to the cell membrane. The enzyme catalyses heme b + (2E,6E)-farnesyl diphosphate + H2O = Fe(II)-heme o + diphosphate. The protein operates within porphyrin-containing compound metabolism; heme O biosynthesis; heme O from protoheme: step 1/1. Functionally, converts heme B (protoheme IX) to heme O by substitution of the vinyl group on carbon 2 of heme B porphyrin ring with a hydroxyethyl farnesyl side group. This is Protoheme IX farnesyltransferase from Aeropyrum pernix (strain ATCC 700893 / DSM 11879 / JCM 9820 / NBRC 100138 / K1).